The sequence spans 829 residues: MAQPRYTRIDNRRPSSNYCSTVTVVVFVALCLVGIWMMTSSSVGPAQNVDEVSLDNKDGIKKQMTPPAEEGNGQKFEDAPVETPNEDKKGDGDASLPKEDESSSKQDNQEEKKEEKTKEEFTPSSETKSETEGGEDQKDDSKSENGGGGDLDEKKDLKDNSDEENPDTNEKQTKPETEDNELGEDGENQKQFESDNGEKKSIDDDKKSSDDDKENKTGNEDTETKTEKENTETNVDVQVEQEGQSKNETSGDLSPPGAQLELLNETTAQNGSFSTQATESKNEKEAQKGSGDKLDYKWALCNTTAGPDYIPCLDNVQAIRSLPSTKHYEHRERHCPDSPPTCLVPLPDGYKRPIEWPKSREKIWYTNVPHTKLAEYKGHQNWVKVTGEYLTFPGGGTQFKHGALHYIDFIQESVPAIAWGKRSRVVLDVGCGVASFGGFLFDRDVITMSLAPKDEHEAQVQFALERGIPAISAVMGTTRLPFPGRVFDIVHCARCRVPWHIEGGKLLLELNRVLRPGGFFVWSATPVYQKKTEDVEIWKAMSELIKKMCWELVSINKDTINGVGVATYRKPTSNECYKNRSEPVPPICADSDDPNASWKVPLQACMHTAPEDKTQRGSQWPEQWPARLEKAPFWLSSSQTGVYGKAAPEDFSADYEHWKRVVTKSYLNGLGINWASVRNVMDMRAVYGGFAAALRDLKVWVMNVVPIDSPDTLAIIYERGLFGIYHDWCESFSTYPRSYDLLHADHLFSKLKQRCNLTAVIAEVDRVLRPEGKLIVRDDAETIQQVEGMVKAMKWEVRMTYSKEKEGLLSVQKSIWRPSEVETLTYAIG.

The Cytoplasmic segment spans residues 1–17; it reads MAQPRYTRIDNRRPSSN. Residues 18-38 form a helical; Signal-anchor for type II membrane protein membrane-spanning segment; the sequence is YCSTVTVVVFVALCLVGIWMM. Over 39–829 the chain is Lumenal; it reads TSSSVGPAQN…EVETLTYAIG (791 aa). The interval 55–258 is disordered; that stretch reads DNKDGIKKQM…TSGDLSPPGA (204 aa). 4 stretches are compositionally biased toward basic and acidic residues: residues 85–143, 151–160, 168–177, and 187–231; these read NEDK…DSKS, LDEKKDLKDN, TNEKQTKPET, and ENQK…KENT. N-linked (GlcNAc...) asparagine glycans are attached at residues Asn215, Asn247, Asn264, and Asn270. Positions 241-252 are enriched in polar residues; sequence QEGQSKNETSGD. The segment at 271 to 291 is disordered; the sequence is GSFSTQATESKNEKEAQKGSG. Residues 280 to 291 show a composition bias toward basic and acidic residues; sequence SKNEKEAQKGSG. N-linked (GlcNAc...) asparagine glycosylation is found at Asn302, Asn579, Asn595, and Asn756.

It belongs to the methyltransferase superfamily.

Its subcellular location is the golgi apparatus membrane. This is Probable methyltransferase PMT26 from Arabidopsis thaliana (Mouse-ear cress).